A 643-amino-acid polypeptide reads, in one-letter code: Extracellular metalloproteinase 4 (643 aa).

Residues 1–18 form the signal peptide; the sequence is MHGLLLAGLLALPLNVLA. Residues 19–254 constitute a propeptide that is removed on maturation; it reads HPTESHSSGI…VHSVVDYVSA (236 aa). Over residues 47–57 the composition is skewed to basic and acidic residues; that stretch reads TKSDAVPKQDD. Residues 47 to 71 are disordered; the sequence is TKSDAVPKQDDESFTTSSTGDDNVS. Polar residues predominate over residues 60-71; it reads FTTSSTGDDNVS. Asparagine 271 and asparagine 420 each carry an N-linked (GlcNAc...) asparagine glycan. Residue histidine 437 participates in Zn(2+) binding. Residue glutamate 438 is part of the active site. A Zn(2+)-binding site is contributed by histidine 441. N-linked (GlcNAc...) asparagine glycosylation is found at asparagine 510 and asparagine 553.

Belongs to the peptidase M36 family. Requires Zn(2+) as cofactor.

The protein resides in the secreted. Secreted metalloproteinase probably acting as a virulence factor. The polypeptide is Extracellular metalloproteinase 4 (MEP4) (Arthroderma benhamiae (Trichophyton mentagrophytes)).